We begin with the raw amino-acid sequence, 431 residues long: Trigger factor (431 aa).

The PPIase FKBP-type domain occupies 160 to 245 (EDRVTIDFSG…LKKVEVMVLP (86 aa)).

This sequence belongs to the FKBP-type PPIase family. Tig subfamily.

The protein resides in the cytoplasm. It carries out the reaction [protein]-peptidylproline (omega=180) = [protein]-peptidylproline (omega=0). Functionally, involved in protein export. Acts as a chaperone by maintaining the newly synthesized protein in an open conformation. Functions as a peptidyl-prolyl cis-trans isomerase. This chain is Trigger factor, found in Actinobacillus succinogenes (strain ATCC 55618 / DSM 22257 / CCUG 43843 / 130Z).